Consider the following 1513-residue polypeptide: DNA polymerase alpha catalytic subunit (1513 aa).

The tract at residues 235–254 (STNQNANASDSKRVSNQTND) is disordered. Zn(2+)-binding residues include Cys1344, Cys1347, Cys1370, Cys1373, Cys1404, Cys1409, Cys1422, and Cys1427. Residues 1344–1373 (CPHCSESYHFPGIFQDGKNNTLSGLLCIKC) form a CysA-type zinc finger. Residues 1404–1427 (CQEPACGAVSRQLLYNNKCINLAC) carry the CysB motif motif.

It belongs to the DNA polymerase type-B family.

It is found in the nucleus. The enzyme catalyses DNA(n) + a 2'-deoxyribonucleoside 5'-triphosphate = DNA(n+1) + diphosphate. Functionally, polymerase alpha in a complex with DNA primase is a replicative polymerase. In Oxytricha trifallax (Sterkiella histriomuscorum), this protein is DNA polymerase alpha catalytic subunit.